A 513-amino-acid polypeptide reads, in one-letter code: ATP synthase subunit alpha (513 aa).

Residue 169 to 176 coordinates ATP; that stretch reads GDRQVGKT.

This sequence belongs to the ATPase alpha/beta chains family. In terms of assembly, F-type ATPases have 2 components, CF(1) - the catalytic core - and CF(0) - the membrane proton channel. CF(1) has five subunits: alpha(3), beta(3), gamma(1), delta(1), epsilon(1). CF(0) has three main subunits: a(1), b(2) and c(9-12). The alpha and beta chains form an alternating ring which encloses part of the gamma chain. CF(1) is attached to CF(0) by a central stalk formed by the gamma and epsilon chains, while a peripheral stalk is formed by the delta and b chains.

It localises to the cell inner membrane. It carries out the reaction ATP + H2O + 4 H(+)(in) = ADP + phosphate + 5 H(+)(out). In terms of biological role, produces ATP from ADP in the presence of a proton gradient across the membrane. The alpha chain is a regulatory subunit. The sequence is that of ATP synthase subunit alpha from Aeromonas salmonicida (strain A449).